A 590-amino-acid polypeptide reads, in one-letter code: Aspartate--tRNA(Asp/Asn) ligase (590 aa).

Glu176 provides a ligand contact to L-aspartate. Positions 200-203 are aspartate; that stretch reads QLFK. Residues Arg222 and His451 each contribute to the L-aspartate site. Residue 222-224 participates in ATP binding; the sequence is RDE. Glu485 lines the ATP pocket. Arg492 contributes to the L-aspartate binding site. 537 to 540 is a binding site for ATP; sequence GIDR.

It belongs to the class-II aminoacyl-tRNA synthetase family. Type 1 subfamily. As to quaternary structure, homodimer.

It is found in the cytoplasm. It carries out the reaction tRNA(Asx) + L-aspartate + ATP = L-aspartyl-tRNA(Asx) + AMP + diphosphate. In terms of biological role, aspartyl-tRNA synthetase with relaxed tRNA specificity since it is able to aspartylate not only its cognate tRNA(Asp) but also tRNA(Asn). Reaction proceeds in two steps: L-aspartate is first activated by ATP to form Asp-AMP and then transferred to the acceptor end of tRNA(Asp/Asn). The chain is Aspartate--tRNA(Asp/Asn) ligase from Ehrlichia ruminantium (strain Welgevonden).